Consider the following 572-residue polypeptide: Urease subunit alpha (572 aa).

The Urease domain maps to 134 to 572 (AGIDSHIHLI…ASMNQRYFFG (439 aa)). Ni(2+) contacts are provided by H139, H141, and K222. An N6-carboxylysine modification is found at K222. Position 224 (H224) interacts with substrate. Residues H251 and H277 each contribute to the Ni(2+) site. H325 functions as the Proton donor in the catalytic mechanism. Ni(2+) is bound at residue D365.

This sequence belongs to the metallo-dependent hydrolases superfamily. Urease alpha subunit family. Heterotrimer of UreA (gamma), UreB (beta) and UreC (alpha) subunits. Three heterotrimers associate to form the active enzyme. It depends on Ni cation as a cofactor. In terms of processing, carboxylation allows a single lysine to coordinate two nickel ions.

The protein resides in the cytoplasm. The enzyme catalyses urea + 2 H2O + H(+) = hydrogencarbonate + 2 NH4(+). Its pathway is nitrogen metabolism; urea degradation; CO(2) and NH(3) from urea (urease route): step 1/1. The protein is Urease subunit alpha of Yersinia pseudotuberculosis serotype O:1b (strain IP 31758).